The primary structure comprises 210 residues: MQPGLWLLLATQLAALRGSSVLQQAPGSVMVQTNGMVIMSCEAKTSPTSTRIYWLRHRQAPSPDSHYECLAYWDPIKGIVYGQEVEPEKLTVFPDATRSILNLTSVKPADSGIYFCMTVGSPELTFGKGTRLSVVDVLPTNSQPTKKPTPRKKMCRPPSPVTQKGPSCGLLTLGLLVAGVLVLLVSLGVAIHLYRLKRRARLRLLKQFYK.

Residues 1 to 21 form the signal peptide; the sequence is MQPGLWLLLATQLAALRGSSV. The Ig-like V-type domain maps to 22–132; the sequence is LQQAPGSVMV…ELTFGKGTRL (111 aa). Over 22–170 the chain is Extracellular; the sequence is LQQAPGSVMV…VTQKGPSCGL (149 aa). A disulfide bridge links C41 with C116. A glycan (N-linked (GlcNAc...) asparagine) is linked at N102. The disordered stretch occupies residues 139-161; the sequence is PTNSQPTKKPTPRKKMCRPPSPV. Residues 171 to 191 traverse the membrane as a helical segment; sequence LTLGLLVAGVLVLLVSLGVAI. Topologically, residues 192–210 are cytoplasmic; that stretch reads HLYRLKRRARLRLLKQFYK.

As to quaternary structure, forms disulfide-linked heterodimers with CD8A at the cell surface. Interacts with CD3D; this interaction couples TCR-CD3 with CD8. Interacts with LCK. In terms of processing, phosphorylated as a consequence of T-cell activation. Palmitoylated at the cytoplasmic tail and thereby targets the heterodimer CD8A/CD8B to lipid rafts unlike CD8A homodimers.

It localises to the cell membrane. Functionally, integral membrane glycoprotein that plays an essential role in the immune response and serves multiple functions in responses against both external and internal offenses. In T-cells, functions primarily as a coreceptor for MHC class I molecule:peptide complex. The antigens presented by class I peptides are derived from cytosolic proteins while class II derived from extracellular proteins. Interacts simultaneously with the T-cell receptor (TCR) and the MHC class I proteins presented by antigen presenting cells (APCs). In turn, recruits the Src kinase LCK to the vicinity of the TCR-CD3 complex. A palmitoylation site in the cytoplasmic tail of CD8B chain contributes to partitioning of CD8 into the plasma membrane lipid rafts where signaling proteins are enriched. Once LCK recruited, it initiates different intracellular signaling pathways by phosphorylating various substrates ultimately leading to lymphokine production, motility, adhesion and activation of cytotoxic T-lymphocytes (CTLs). Additionally, plays a critical role in thymic selection of CD8+ T-cells. This is T-cell surface glycoprotein CD8 beta chain (CD8B) from Felis catus (Cat).